A 493-amino-acid polypeptide reads, in one-letter code: Adenylyltransferase and sulfurtransferase uba4 (493 aa).

ATP contacts are provided by residues Gly99, Asp120, Ser127–Arg131, Lys144, and Asp188–Asn189. Zn(2+)-binding residues include Cys237 and Cys240. Catalysis depends on Cys254, which acts as the Glycyl thioester intermediate; for adenylyltransferase activity. Residues Cys316 and Cys319 each contribute to the Zn(2+) site. Positions Ile376–Pro491 constitute a Rhodanese domain. The active-site Cysteine persulfide intermediate; for sulfurtransferase activity is Cys446.

It in the N-terminal section; belongs to the HesA/MoeB/ThiF family. UBA4 subfamily. Requires Zn(2+) as cofactor.

It localises to the cytoplasm. The protein resides in the cytosol. The enzyme catalyses [molybdopterin-synthase sulfur-carrier protein]-C-terminal Gly-Gly + ATP + H(+) = [molybdopterin-synthase sulfur-carrier protein]-C-terminal Gly-Gly-AMP + diphosphate. It catalyses the reaction [molybdopterin-synthase sulfur-carrier protein]-C-terminal Gly-Gly-AMP + S-sulfanyl-L-cysteinyl-[cysteine desulfurase] + AH2 = [molybdopterin-synthase sulfur-carrier protein]-C-terminal-Gly-aminoethanethioate + L-cysteinyl-[cysteine desulfurase] + A + AMP + 2 H(+). The protein operates within tRNA modification; 5-methoxycarbonylmethyl-2-thiouridine-tRNA biosynthesis. Its pathway is cofactor biosynthesis; molybdopterin biosynthesis. Functionally, plays a central role in 2-thiolation of mcm(5)S(2)U at tRNA wobble positions of cytosolic tRNA(Lys), tRNA(Glu) and tRNA(Gln). Also essential during biosynthesis of the molybdenum cofactor. Acts by mediating the C-terminal thiocarboxylation of sulfur carriers urm1 and mocs2a. Its N-terminus first activates urm1 and mocs2a as acyl-adenylates (-COAMP), then the persulfide sulfur on the catalytic cysteine is transferred to urm1 and mocs2a to form thiocarboxylation (-COSH) of their C-terminus. The reaction probably involves hydrogen sulfide that is generated from the persulfide intermediate and that acts as a nucleophile towards urm1 and mocs2a. Subsequently, a transient disulfide bond is formed. Does not use thiosulfate as sulfur donor; nfs1 probably acting as a sulfur donor for thiocarboxylation reactions. The sequence is that of Adenylyltransferase and sulfurtransferase uba4 from Aspergillus fumigatus (strain CBS 144.89 / FGSC A1163 / CEA10) (Neosartorya fumigata).